The chain runs to 90 residues: Large ribosomal subunit protein bL27 (90 aa).

The tract at residues 1–21 (MASKKAGGSTRNGRDSEAKRL) is disordered.

This sequence belongs to the bacterial ribosomal protein bL27 family.

This is Large ribosomal subunit protein bL27 from Neisseria gonorrhoeae (strain ATCC 700825 / FA 1090).